The primary structure comprises 283 residues: Nucleoid occlusion protein (283 aa).

The H-T-H motif DNA-binding region spans 148-167; it reads EALAQRLGKGQSTIANKLRL.

It belongs to the ParB family.

It is found in the cytoplasm. The protein localises to the nucleoid. Effects nucleoid occlusion by binding relatively nonspecifically to DNA and preventing the assembly of the division machinery in the vicinity of the nucleoid, especially under conditions that disturb the cell cycle. It helps to coordinate cell division and chromosome segregation by preventing the formation of the Z ring through the nucleoid, which would cause chromosome breakage. The chain is Nucleoid occlusion protein (noc) from Bacillus subtilis (strain 168).